The sequence spans 225 residues: Proteasome activator 28 (225 aa).

Belongs to the PA28 family. As to quaternary structure, homoheptamer. The homoheptamer associates with the 20S proteasome.

The protein localises to the nucleus. Subunit of the 11S REG (also called PA28) proteasome regulator, a doughnut-shaped homoheptamer which associates with the proteasome. 11S REG-gamma activates preferentially the trypsin-like catalytic subunit of the proteasome. May also be involved in cell cycle regulation. The chain is Proteasome activator 28 (psmE3) from Dictyostelium discoideum (Social amoeba).